We begin with the raw amino-acid sequence, 159 residues long: 3-dehydroquinate dehydratase (159 aa).

The active-site Proton acceptor is Y22. Substrate-binding residues include N73, H79, and D86. H99 functions as the Proton donor in the catalytic mechanism. Residues 100 to 101 and R110 each bind substrate; that span reads IS.

It belongs to the type-II 3-dehydroquinase family. In terms of assembly, homododecamer.

The enzyme catalyses 3-dehydroquinate = 3-dehydroshikimate + H2O. It participates in metabolic intermediate biosynthesis; chorismate biosynthesis; chorismate from D-erythrose 4-phosphate and phosphoenolpyruvate: step 3/7. In terms of biological role, catalyzes a trans-dehydration via an enolate intermediate. The polypeptide is 3-dehydroquinate dehydratase (Campylobacter jejuni subsp. doylei (strain ATCC BAA-1458 / RM4099 / 269.97)).